Consider the following 750-residue polypeptide: Dual specificity tyrosine-phosphorylation-regulated kinase 1A (750 aa).

Disordered regions lie at residues 56-81 (ALPY…RDPA) and 104-129 (YAKK…KVYN). Residues 109 to 126 (RRHQQGQGDDSSHKKERK) carry the Bipartite nuclear localization signal motif. One can recognise a Protein kinase domain in the interval 151–471 (YEIDSLIGKG…PYYALQHSFF (321 aa)). ATP contacts are provided by residues 157–165 (IGKGSFGQV), K180, and 230–233 (FEML). The Proton acceptor role is filled by D279. Disordered regions lie at residues 400 to 434 (TKDG…AGES), 477 to 531 (EGTN…RHSG), 583 to 666 (SQKN…GNQA), and 731 to 750 (DRED…VASS). Over residues 477–493 (EGTNTSNSVSTSPAMEQ) the composition is skewed to polar residues. Residues 494–517 (SQSSGTTSSTSSSSGGSSGTSNSG) show a composition bias toward low complexity. Residues 584-612 (QKNVPHHHGNGSHHHHHHHHHHHGQHILS) are histidine-rich domain (HRD). Positions 587–608 (VPHHHGNGSHHHHHHHHHHHGQ) are enriched in basic residues. Positions 610-621 (ILSNRTRTRIYN) are enriched in polar residues. A compositionally biased stretch (low complexity) spans 622–659 (SPSTSSSTQDSMDIGNSHHSMTSLSSSTTSSSTSSSST). Residues 741-750 (CVQQSPVASS) are compositionally biased toward polar residues.

This sequence belongs to the protein kinase superfamily. CMGC Ser/Thr protein kinase family. MNB/DYRK subfamily. Autophosphorylated on tyrosine residues.

Its subcellular location is the nucleus. The protein localises to the nucleus speckle. The catalysed reaction is L-seryl-[protein] + ATP = O-phospho-L-seryl-[protein] + ADP + H(+). It carries out the reaction L-threonyl-[protein] + ATP = O-phospho-L-threonyl-[protein] + ADP + H(+). It catalyses the reaction L-tyrosyl-[protein] + ATP = O-phospho-L-tyrosyl-[protein] + ADP + H(+). The enzyme catalyses [DNA-directed RNA polymerase] + ATP = phospho-[DNA-directed RNA polymerase] + ADP + H(+). Functionally, dual-specificity kinase which possesses both serine/threonine and tyrosine kinase activities. Exhibits a substrate preference for proline at position P+1 and arginine at position P-3. Plays an important role in double-strand breaks (DSBs) repair following DNA damage. Mechanistically, phosphorylates RNF169 and increases its ability to block accumulation of TP53BP1 at the DSB sites thereby promoting homologous recombination repair (HRR). Also acts as a positive regulator of transcription by acting as a CTD kinase that mediates phosphorylation of the CTD (C-terminal domain) of the large subunit of RNA polymerase II (RNAP II) POLR2A. Modulates alternative splicing by phosphorylating the splice factor SRSF6. Phosphorylates SEPTIN4, SEPTIN5 and SF3B1. The sequence is that of Dual specificity tyrosine-phosphorylation-regulated kinase 1A from Xenopus laevis (African clawed frog).